The primary structure comprises 509 residues: Maturase K (509 aa).

The protein belongs to the intron maturase 2 family. MatK subfamily.

The protein resides in the plastid. It localises to the chloroplast. In terms of biological role, usually encoded in the trnK tRNA gene intron. Probably assists in splicing its own and other chloroplast group II introns. The polypeptide is Maturase K (Amentotaxus argotaenia (Chinese flowering yew)).